Consider the following 101-residue polypeptide: Small ribosomal subunit protein bS18c (101 aa).

It belongs to the bacterial ribosomal protein bS18 family. Part of the 30S ribosomal subunit.

It localises to the plastid. Its subcellular location is the chloroplast. This chain is Small ribosomal subunit protein bS18c (rps18), found in Arabidopsis thaliana (Mouse-ear cress).